The sequence spans 469 residues: Glutamate--tRNA ligase (469 aa).

Positions 11–21 (PSPTGFIHLGN) match the 'HIGH' region motif. Positions 118 to 131 (GEKPRYDGTWRPEP) are enriched in basic and acidic residues. The interval 118-139 (GEKPRYDGTWRPEPGKVLPEPP) is disordered. The 'KMSKS' region signature appears at 243 to 247 (KMSKR). Lys246 is an ATP binding site.

The protein belongs to the class-I aminoacyl-tRNA synthetase family. Glutamate--tRNA ligase type 1 subfamily. In terms of assembly, monomer.

It localises to the cytoplasm. It carries out the reaction tRNA(Glu) + L-glutamate + ATP = L-glutamyl-tRNA(Glu) + AMP + diphosphate. In terms of biological role, catalyzes the attachment of glutamate to tRNA(Glu) in a two-step reaction: glutamate is first activated by ATP to form Glu-AMP and then transferred to the acceptor end of tRNA(Glu). In Burkholderia pseudomallei (strain 1106a), this protein is Glutamate--tRNA ligase.